We begin with the raw amino-acid sequence, 61 residues long: Small ribosomal subunit protein uS14B (61 aa).

Positions 24, 27, 40, and 43 each coordinate Zn(2+).

The protein belongs to the universal ribosomal protein uS14 family. Zinc-binding uS14 subfamily. Part of the 30S ribosomal subunit. Contacts proteins S3 and S10. It depends on Zn(2+) as a cofactor.

In terms of biological role, binds 16S rRNA, required for the assembly of 30S particles and may also be responsible for determining the conformation of the 16S rRNA at the A site. This Lactiplantibacillus plantarum (strain ATCC BAA-793 / NCIMB 8826 / WCFS1) (Lactobacillus plantarum) protein is Small ribosomal subunit protein uS14B.